We begin with the raw amino-acid sequence, 618 residues long: Tyrosine-protein kinase ZAP-70 (618 aa).

Residues 10-102 enclose the SH2 1 domain; the sequence is FFYGSISRAE…GLPCNLRKPC (93 aa). Positions 103-162 are interdomain A; it reads NRPPGLEPQPGVFDCLRDAMVRDYVRQTWKLEGDALEQAIISQAPQVEKLIATTAHERMP. Residues 163–254 form the SH2 2 domain; that stretch reads WYHSSLTREE…GLIYRLKEVC (92 aa). Residue Tyr248 is modified to Phosphotyrosine. The segment at 255–336 is interdomain B; the sequence is PNSSASAAVA…KKLFLKRENL (82 aa). The segment at 270 to 320 is disordered; sequence AHPSTFTQPQRRVDTLNSDGYTPEPARLASSTDKPRPMPMDTSVYESPYSD. Polar residues predominate over residues 273–289; that stretch reads STFTQPQRRVDTLNSDG. Ser287 is modified (phosphoserine). Position 290 is a phosphotyrosine (Tyr290). Residue Tyr314 is modified to Phosphotyrosine; by LCK. Tyr318 carries the phosphotyrosine modification. The 261-residue stretch at 337–597 folds into the Protein kinase domain; the sequence is LVADIELGCG…VEQRMRNYYY (261 aa). ATP contacts are provided by residues 343 to 351 and Lys368; that span reads LGCGNFGSV. The active-site Proton acceptor is Asp460. Phosphotyrosine is present on residues Tyr491 and Tyr492. Residue Lys543 forms a Glycyl lysine isopeptide (Lys-Gly) (interchain with G-Cter in ubiquitin) linkage.

Belongs to the protein kinase superfamily. Tyr protein kinase family. SYK/ZAP-70 subfamily. Interacts with CD247/CD3Z; this interaction docks ZAP70 at the stimulated TCR. Interacts with NFAM1. Interacts with adapter protein SLA; this interaction negatively regulates T-cell receptor signaling. Interacts with VAV1. Interacts with CBL; this interaction promotes ubiquitination, internalization and subsequent degradation of CD247/CD3Z. Identified in a complex with CBL and UBE2L3. Interacts with SHB. Interacts with adapter protein SLA2; this interaction negatively regulates T-cell receptor signaling. Interacts with CBLB. Interacts (via SH2 domains) with RHOH; this interaction regulates ZAP70 subcellular localization. Interacts with DEF6. Interacts (ubiquitinated form) with OTUD7B and UBASH3B. Post-translationally, phosphorylated on tyrosine residues upon T-cell antigen receptor (TCR) stimulation. Phosphorylation of Tyr-314 and Tyr-314 are essential for ZAP70 positive function on T-lymphocyte activation whereas Tyr-290 has a negative regulatory role. Within the C-terminal kinase domain, Tyr-491 and Tyr-492 are phosphorylated after TCR induction, Tyr-491 playing a negative regulatory role and Tyr-492 a positive. Tyr-492 is dephosphorylated by PTN22. Ubiquitinated in response to T cell activation. Deubiquitinated by OTUD7B. As to expression, isoform 1 and isoform 2 are expressed in thymus, spleen and lymph nodes.

The protein resides in the cytoplasm. Its subcellular location is the cell membrane. The catalysed reaction is L-tyrosyl-[protein] + ATP = O-phospho-L-tyrosyl-[protein] + ADP + H(+). With respect to regulation, activated by phosphorylation at Tyr-492 in the activation loop. Tyrosine kinase that plays an essential role in regulation of the adaptive immune response. Regulates motility, adhesion and cytokine expression of mature T-cells, as well as thymocyte development. Also contributes to the development and activation of primary B-lymphocytes. When antigen presenting cells (APC) activate T-cell receptor (TCR), a serie of phosphorylations lead to the recruitment of ZAP70 to the doubly phosphorylated TCR component CD3Z through ITAM motif at the plasma membrane. This recruitment serves to localization to the stimulated TCR and to relieve its autoinhibited conformation. Release of ZAP70 active conformation is further stabilized by phosphorylation mediated by LCK. Subsequently, ZAP70 phosphorylates at least 2 essential adapter proteins: LAT and LCP2. In turn, a large number of signaling molecules are recruited and ultimately lead to lymphokine production, T-cell proliferation and differentiation. Furthermore, ZAP70 controls cytoskeleton modifications, adhesion and mobility of T-lymphocytes, thus ensuring correct delivery of effectors to the APC. ZAP70 is also required for TCR-CD3Z internalization and degradation through interaction with the E3 ubiquitin-protein ligase CBL and adapter proteins SLA and SLA2. Thus, ZAP70 regulates both T-cell activation switch on and switch off by modulating TCR expression at the T-cell surface. During thymocyte development, ZAP70 promotes survival and cell-cycle progression of developing thymocytes before positive selection (when cells are still CD4/CD8 double negative). Additionally, ZAP70-dependent signaling pathway may also contribute to primary B-cells formation and activation through B-cell receptor (BCR). This Mus musculus (Mouse) protein is Tyrosine-protein kinase ZAP-70 (Zap70).